A 367-amino-acid chain; its full sequence is MDRLDRRLAATLLLFSFISFSTQKTSISWCVVSEAEEQKCLDLAGSATARNIRGTLLCVRGQSPTDCMEKIKNGTADAAAMFADDIYTAGWCFGLELAAGESYNGVDGISYYVVALARRSSSDLSLLEMHERSSCHPRIRTTVGWTVPIGFLVNTSQISVDEQCNFPKAVGDFFGYSCVPGVKDREHDPRGSNPKYLCEACIGDDNERHICVNNHRERHYGEAGALRCVAENLGDVAFVKHTTIFDNMDGNNMESWAMDLELEDLKLLCPDGSEAGPFDHETCHLAVVPANAVVVRPEDKCRVWKYLERLQNAFGNTTMFSSVGYTQSDLLFSDSTHHLLRVVGSYTSWLGPSYTTVLQAFECESLC.

The first 23 residues, 1–23 (MDRLDRRLAATLLLFSFISFSTQ), serve as a signal peptide directing secretion. In terms of domain architecture, Transferrin-like spans 27-363 (ISWCVVSEAE…YTTVLQAFEC (337 aa)).

Belongs to the transferrin family. Interacts with OTOL1. Expressed in the sacculus during the day.

Its subcellular location is the secreted. Functionally, required for normal otolith growth and deposition of otolin-1 in the otolith. This Oncorhynchus mykiss (Rainbow trout) protein is Otolith matrix protein 1 (otomp).